Here is a 614-residue protein sequence, read N- to C-terminus: Vitamin B12 transporter BtuB (614 aa).

The first 20 residues, 1–20, serve as a signal peptide directing secretion; sequence MIKKASLLTACSVTAFSAWA. The TonB box motif lies at 26 to 33; that stretch reads DTLVVTAN. The region spanning 38–152 is the TBDR plug domain; the sequence is PRSTVLAPTT…IGGVVNIITT (115 aa). Cyanocob(III)alamin is bound by residues Leu83, Ser85, Asn92, and 110 to 111; that span reads VS. The 460-residue stretch at 155–614 folds into the TBDR beta-barrel domain; the sequence is HPGTEISAGW…EYTLSGSYTF (460 aa). 3 consecutive transmembrane segments (beta stranded) span residues 158-165, 169-178, and 184-195; these read TEISAGWG, YQNYDVSTQQ, and TRVTLLGDYAHT. Residues Asp199, Gln211, Asp213, and Asp215 each coordinate Ca(2+). The next 2 beta stranded transmembrane spans lie at 217–227 and 232–248; these read FLSKTLYGALE and DVWS…NRTN. Residues Tyr249 and Asp250 each coordinate Ca(2+). Ala251 serves as a coordination point for cyanocob(III)alamin. Asp261 contacts Ca(2+). The next 14 beta stranded transmembrane spans lie at 263-277, 279-296, 309-325, 328-337, 353-369, 371-381, 385-400, 403-417, 434-443, 449-458, 473-490, 494-509, 517-529, and 535-550; these read RKLY…LRYN, ELIK…KDYN, TLDE…NNII, HGNIGAGVDW, YDQR…QQVG, FTFEGAGRSDD, FGRH…WEFI, YRFI…KAPN, KSKQWEGAFE, VNWRISGYRN, YYNE…TANF, PLTH…ARNA, RRAK…QLDW, and DWGI…YDKD. Thr309 lines the cyanocob(III)alamin pocket. Arg517 contributes to the cyanocob(III)alamin binding site. Residue Tyr551 participates in cyanocob(III)alamin binding. The next 3 beta stranded transmembrane spans lie at 558-572, 585-596, and 602-614; these read TVKM…LAVA, IANLFDKDYETV, and AGRE…SYTF. The TonB C-terminal box signature appears at 597–614; the sequence is YGYQTAGREYTLSGSYTF.

Belongs to the TonB-dependent receptor family. BtuB (TC 1.B.14.3.1) subfamily.

Its subcellular location is the cell outer membrane. In terms of biological role, involved in the active translocation of vitamin B12 (cyanocobalamin) across the outer membrane to the periplasmic space. It derives its energy for transport by interacting with the trans-periplasmic membrane protein TonB. This is Vitamin B12 transporter BtuB from Escherichia coli O1:K1 / APEC.